The sequence spans 2555 residues: Plipastatin synthase subunit C (2555 aa).

The interval 7–306 (IQDIYPLSFM…NTIPIRAQSD (300 aa)) is condensation 1. The adenylation 1 stretch occupies residues 491 to 894 (TYAELDMYAS…SIEGVREAAV (404 aa)). The 76-residue stretch at 967–1042 (APRNVTEMKL…GLATVIREGT (76 aa)) folds into the Carrier 1 domain. Ser-1002 carries the post-translational modification O-(pantetheine 4'-phosphoryl)serine. The segment at 1054 to 1344 (KQETYPVSSA…NTLALRTRPE (291 aa)) is condensation 2. Residues 1532 to 1927 (TYEDLNSWAN…QIDGVKEAAV (396 aa)) form an adenylation 2 region. The Carrier 2 domain maps to 2003–2077 (PPRNELEEQL…DLSPFIRKSE (75 aa)). Residue Ser-2038 is modified to O-(pantetheine 4'-phosphoryl)serine. Residues 2085-2548 (IQGDVPWTPV…SLTAEDLDSI (464 aa)) form an epimerization 3 region.

This sequence belongs to the ATP-dependent AMP-binding enzyme family. The cofactor is pantetheine 4'-phosphate.

This protein is a multifunctional enzyme, able to activate and polymerize the amino acids Glu and Ala/Val as part of the biosynthesis of the lipopeptide antibiotic plipastatin. The Ala/Val residue is further epimerized to the D-isomer form. The activation sites for these amino acids consist of individual domains. This Bacillus subtilis (strain 168) protein is Plipastatin synthase subunit C (ppsC).